Reading from the N-terminus, the 389-residue chain is S-adenosylmethionine synthase (389 aa).

His-19 is an ATP binding site. Asp-21 is a Mg(2+) binding site. Glu-47 is a binding site for K(+). 2 residues coordinate L-methionine: Glu-60 and Gln-103. The interval 103-113 (QSGDIAQGVDR) is flexible loop. Residues 168-170 (DGK), 234-235 (RF), Asp-243, 249-250 (RK), Ala-266, and Lys-270 each bind ATP. Asp-243 serves as a coordination point for L-methionine. Lys-274 is an L-methionine binding site.

This sequence belongs to the AdoMet synthase family. Homotetramer; dimer of dimers. The cofactor is Mg(2+). It depends on K(+) as a cofactor.

It is found in the cytoplasm. The enzyme catalyses L-methionine + ATP + H2O = S-adenosyl-L-methionine + phosphate + diphosphate. Its pathway is amino-acid biosynthesis; S-adenosyl-L-methionine biosynthesis; S-adenosyl-L-methionine from L-methionine: step 1/1. Functionally, catalyzes the formation of S-adenosylmethionine (AdoMet) from methionine and ATP. The overall synthetic reaction is composed of two sequential steps, AdoMet formation and the subsequent tripolyphosphate hydrolysis which occurs prior to release of AdoMet from the enzyme. The sequence is that of S-adenosylmethionine synthase from Nitratidesulfovibrio vulgaris (strain DSM 19637 / Miyazaki F) (Desulfovibrio vulgaris).